Here is a 328-residue protein sequence, read N- to C-terminus: Acetyl-coenzyme A carboxylase carboxyl transferase subunit alpha (328 aa).

Positions 42 to 296 (SFKEQLSILK…KESLISELHF (255 aa)) constitute a CoA carboxyltransferase C-terminal domain.

Belongs to the AccA family. As to quaternary structure, acetyl-CoA carboxylase is a heterohexamer composed of biotin carboxyl carrier protein (accB), biotin carboxylase (accC) and two subunits each of ACCase subunit alpha (accA) and ACCase subunit beta (accD).

It is found in the plastid. The protein resides in the chloroplast. The enzyme catalyses N(6)-carboxybiotinyl-L-lysyl-[protein] + acetyl-CoA = N(6)-biotinyl-L-lysyl-[protein] + malonyl-CoA. It functions in the pathway lipid metabolism; malonyl-CoA biosynthesis; malonyl-CoA from acetyl-CoA: step 1/1. Its function is as follows. Component of the acetyl coenzyme A carboxylase (ACC) complex. First, biotin carboxylase catalyzes the carboxylation of biotin on its carrier protein (BCCP) and then the CO(2) group is transferred by the carboxyltransferase to acetyl-CoA to form malonyl-CoA. In Gracilaria tenuistipitata var. liui (Red alga), this protein is Acetyl-coenzyme A carboxylase carboxyl transferase subunit alpha.